We begin with the raw amino-acid sequence, 299 residues long: ATP phosphoribosyltransferase (299 aa).

This sequence belongs to the ATP phosphoribosyltransferase family. Long subfamily. Requires Mg(2+) as cofactor.

It localises to the cytoplasm. The catalysed reaction is 1-(5-phospho-beta-D-ribosyl)-ATP + diphosphate = 5-phospho-alpha-D-ribose 1-diphosphate + ATP. Its pathway is amino-acid biosynthesis; L-histidine biosynthesis; L-histidine from 5-phospho-alpha-D-ribose 1-diphosphate: step 1/9. Feedback inhibited by histidine. Its function is as follows. Catalyzes the condensation of ATP and 5-phosphoribose 1-diphosphate to form N'-(5'-phosphoribosyl)-ATP (PR-ATP). Has a crucial role in the pathway because the rate of histidine biosynthesis seems to be controlled primarily by regulation of HisG enzymatic activity. The sequence is that of ATP phosphoribosyltransferase from Shewanella woodyi (strain ATCC 51908 / MS32).